The following is a 404-amino-acid chain: Short chain dehydrogenase sirR (404 aa).

The first 28 residues, 1 to 28, serve as a signal peptide directing secretion; the sequence is MHSKPQRALVIGATGVSGWSLCLQLLQT. Residues Ser56 and Leu58 each contribute to the NADP(+) site. N-linked (GlcNAc...) asparagine glycans are attached at residues Asn67 and Asn157. Ser237 acts as the Proton donor in catalysis. N-linked (GlcNAc...) asparagine glycosylation is present at Asn274. Val291 is a binding site for NADP(+).

Belongs to the short-chain dehydrogenases/reductases (SDR) family. Highly divergent.

It functions in the pathway mycotoxin biosynthesis. Short chain dehydrogenase; part of the gene cluster that mediates the biosynthesis of sirodesmin PL, an epipolythiodioxopiperazine (ETP) characterized by a disulfide bridged cyclic dipeptide and that acts as a phytotoxin which is involved in the blackleg didease of canola. SirD catalyzes the O-prenylation of L-tyrosine (L-Tyr) in the presence of dimethylallyl diphosphate (DMAPP) to yield 4-O-dimethylallyl-L-Tyr, and therefore represents probably the first pathway-specific enzyme in the biosynthesis of sirodesmin PL. 4-O-dimethylallyl-L-Tyr, then undergoes condensation with L-Ser in a reaction catalyzed by the non-ribosomal peptide synthase sirP to form the diketopiperazine (DKP) backbone. Further bishydroxylation of the DKP performed by the cytochrome P450 monooxygenase sirC leads to the production of the intermediate phomamide. This step is essential to form the reactive thiol group required for toxicity of sirodesmin PL. The next steps of sirodesmin biosynthesis are not well understood yet, but some predictions could be made from intermediate compounds identification. Phomamide is converted into phomalizarine via oxidation, probably by sirT. Further oxidation, methylation (by sirM or sirN) and reduction steps convert phomalizarine to deacetyl sirodesmin. Finally, acetyltransferase sirH probably acetylates deacetyl sirodesmin to produce sirodesmin PL. The protein is Short chain dehydrogenase sirR of Leptosphaeria maculans (Blackleg fungus).